The primary structure comprises 364 residues: Mannitol-1-phosphate 5-dehydrogenase (364 aa).

Residue 6–17 (VLHFGAGNIGRG) participates in NAD(+) binding.

It belongs to the mannitol dehydrogenase family.

It catalyses the reaction D-mannitol 1-phosphate + NAD(+) = beta-D-fructose 6-phosphate + NADH + H(+). The protein is Mannitol-1-phosphate 5-dehydrogenase (mtlD) of Mycoplasma pneumoniae (strain ATCC 29342 / M129 / Subtype 1) (Mycoplasmoides pneumoniae).